The primary structure comprises 128 residues: Aspartate 1-decarboxylase (128 aa).

The active-site Schiff-base intermediate with substrate; via pyruvic acid is the Ser-25. Ser-25 is modified (pyruvic acid (Ser)). Thr-57 is a binding site for substrate. Tyr-58 acts as the Proton donor in catalysis. 73 to 75 (GSA) is a substrate binding site.

Belongs to the PanD family. In terms of assembly, heterooctamer of four alpha and four beta subunits. Pyruvate serves as cofactor. Post-translationally, is synthesized initially as an inactive proenzyme, which is activated by self-cleavage at a specific serine bond to produce a beta-subunit with a hydroxyl group at its C-terminus and an alpha-subunit with a pyruvoyl group at its N-terminus.

The protein localises to the cytoplasm. It carries out the reaction L-aspartate + H(+) = beta-alanine + CO2. Its pathway is cofactor biosynthesis; (R)-pantothenate biosynthesis; beta-alanine from L-aspartate: step 1/1. Functionally, catalyzes the pyruvoyl-dependent decarboxylation of aspartate to produce beta-alanine. The polypeptide is Aspartate 1-decarboxylase (Burkholderia pseudomallei (strain 668)).